Reading from the N-terminus, the 1117-residue chain is Telomerase reverse transcriptase (1117 aa).

The segment at 1 to 191 (MQKINNINNN…VKQKKWYKNN (191 aa)) is TEN. The interval 217-519 (NQYIYPEIQR…ENLEKVEEKL (303 aa)) is RBD. In terms of domain architecture, Reverse transcriptase spans 517–881 (EKLIPEDSFQ…NECQWIGKSI (365 aa)). The interval 520–887 (IPEDSFQKYP…GKSIDMNTLE (368 aa)) is RT. Position 618 (D618) interacts with Mg(2+). The segment at 638–742 (SDLIQDTYFI…NQDKPRCITK (105 aa)) is TRAP. D815 and D816 together coordinate Mg(2+). The tract at residues 888–1117 (IKSIQKQTQQ…SAKSNQQNTN (230 aa)) is CTE.

This sequence belongs to the reverse transcriptase family. Telomerase subfamily. In terms of assembly, component of the telomerase holoenzyme complex, composed of the catalytic core (the catalytic subunit TERT, the telomerase RNA template component TER and TAP65/p65), which is associated with two heterotrimeric subcomplexes: (i) the replication protein A (RPA)-related subcomplex, composed of TEB1, RPA2/TEB2 and RPA3/TEB3 and (ii) the CST-like subcomplex, composed of TAP75/p75, TAP45/p45 and TAP19/p19. TEB1 and the CST-like subcomplex are tethered to the catalytic core by TAP50/p50.

The protein resides in the nucleus. It is found in the chromosome. It localises to the telomere. The enzyme catalyses DNA(n) + a 2'-deoxyribonucleoside 5'-triphosphate = DNA(n+1) + diphosphate. Its function is as follows. Catalytic component of telomerase, an essential ribonucleoprotein enzyme that copies new telomeric repeats onto chromosome ends by repetitively synthesizing the short telomere-repeat sequence 5'-TTGGGG-3' using an RNA template component TER. TERT is a reverse transcriptase that adds simple sequence repeats to chromosome ends by copying a template sequence within the RNA component of the enzyme. This chain is Telomerase reverse transcriptase, found in Tetrahymena thermophila (strain SB210).